Here is a 100-residue protein sequence, read N- to C-terminus: Urease subunit gamma (100 aa).

Belongs to the urease gamma subunit family. Heterotrimer of UreA (gamma), UreB (beta) and UreC (alpha) subunits. Three heterotrimers associate to form the active enzyme.

The protein localises to the cytoplasm. The catalysed reaction is urea + 2 H2O + H(+) = hydrogencarbonate + 2 NH4(+). It functions in the pathway nitrogen metabolism; urea degradation; CO(2) and NH(3) from urea (urease route): step 1/1. This chain is Urease subunit gamma, found in Bordetella pertussis (strain Tohama I / ATCC BAA-589 / NCTC 13251).